The sequence spans 414 residues: uncharacterized protein (414 aa).

Over 1-66 (MNPSVPKVMK…LQRISKDYLK (66 aa)) the chain is Lumenal. The tract at residues 20–51 (SKEMNDTSLQLPSTTRSLSPKESNSNEDFNVD) is disordered. The segment covering 25-51 (DTSLQLPSTTRSLSPKESNSNEDFNVD) has biased composition (polar residues). K40 is covalently cross-linked (Glycyl lysine isopeptide (Lys-Gly) (interchain with G-Cter in ubiquitin)). A helical membrane pass occupies residues 67-87 (PNIGLVLLTVSYFFNSAMVVS). An EamA 1 domain is found at 78–215 (YFFNSAMVVS…SLLGVVLIVR (138 aa)). Residues 88-106 (TKVLENDPDDIANDRQIKP) are Cytoplasmic-facing. Residues 107–127 (LQILLVRMVITYIGTLIYMYI) form a helical membrane-spanning segment. At 128–144 (NKSTISDVPFGKPEVRK) the chain is on the lumenal side. A helical transmembrane segment spans residues 145–167 (WLVLRGCTGFFGVFGMYYSLMYL). Residues 168–171 (TISD) lie on the Cytoplasmic side of the membrane. The helical transmembrane segment at 172–191 (AVLITFLAPSLTIFLSWVIL) threads the bilayer. The Lumenal portion of the chain corresponds to 192–199 (RERFTKVE). The helical transmembrane segment at 200 to 220 (ALGSLISLLGVVLIVRPSFLF) threads the bilayer. Residues 221 to 241 (GTPELTDSSSQIVESSDPKSR) lie on the Cytoplasmic side of the membrane. The chain crosses the membrane as a helical span at residues 242–262 (LIATLVGLWGVLGMSCVYIII). Residues 253–379 (LGMSCVYIII…IISATLWVIR (127 aa)) form the EamA 2 domain. Residues 263 to 269 (RYIGKRA) lie on the Lumenal side of the membrane. The chain crosses the membrane as a helical span at residues 270–290 (HAIMSVSYFSLITAIVSFIGI). At 291–307 (NTIPSMKFQIPHSKKQW) the chain is on the cytoplasmic side. The chain crosses the membrane as a helical span at residues 308–328 (ILFGNLGVSGFIFQLLLTMGI). Over 329 to 357 (QRERAGRGSLMTYTQLLYAVFWDVALYKH) the chain is Lumenal. A helical transmembrane segment spans residues 358 to 378 (WPNIWSWIGMIIIISATLWVI). The Cytoplasmic segment spans residues 379–414 (RIRAANNETTAKDLTPIIDDEENSIPLTEFDLSDSK).

The protein to yeast YPL264c.

The protein resides in the membrane. This is an uncharacterized protein from Saccharomyces cerevisiae (strain ATCC 204508 / S288c) (Baker's yeast).